The sequence spans 664 residues: Fructose-1,6-bisphosphatase class 3 (664 aa).

Belongs to the FBPase class 3 family. Mn(2+) is required as a cofactor.

It catalyses the reaction beta-D-fructose 1,6-bisphosphate + H2O = beta-D-fructose 6-phosphate + phosphate. It participates in carbohydrate biosynthesis; gluconeogenesis. This Bacteroides fragilis (strain YCH46) protein is Fructose-1,6-bisphosphatase class 3.